A 743-amino-acid polypeptide reads, in one-letter code: NAD(P)H-quinone oxidoreductase subunit 5, chloroplastic (743 aa).

16 consecutive transmembrane segments (helical) span residues 9 to 29 (WIIP…LLLF), 40 to 60 (WAFQ…NLSI), 89 to 109 (IDPL…MVLI), 125 to 145 (FAYM…SNLI), 147 to 167 (IYIF…FWFT), 185 to 205 (GDFG…SFEF), 219 to 239 (NEVN…GAIA), 258 to 278 (TPIS…FLVA), 284 to 304 (FIVI…TVFF), 327 to 347 (LGYM…FHLI), 354 to 374 (ALLF…VGYC), 396 to 416 (NSFL…CFWS), 425 to 445 (WLYS…TAFY), 551 to 571 (LFPI…GIPF), 607 to 627 (VFSV…YKPV), and 723 to 743 (YLFF…FLNL).

It belongs to the complex I subunit 5 family. As to quaternary structure, NDH is composed of at least 16 different subunits, 5 of which are encoded in the nucleus.

The protein localises to the plastid. Its subcellular location is the chloroplast thylakoid membrane. It catalyses the reaction a plastoquinone + NADH + (n+1) H(+)(in) = a plastoquinol + NAD(+) + n H(+)(out). It carries out the reaction a plastoquinone + NADPH + (n+1) H(+)(in) = a plastoquinol + NADP(+) + n H(+)(out). In terms of biological role, NDH shuttles electrons from NAD(P)H:plastoquinone, via FMN and iron-sulfur (Fe-S) centers, to quinones in the photosynthetic chain and possibly in a chloroplast respiratory chain. The immediate electron acceptor for the enzyme in this species is believed to be plastoquinone. Couples the redox reaction to proton translocation, and thus conserves the redox energy in a proton gradient. In Ambrosia trifida (Giant ragweed), this protein is NAD(P)H-quinone oxidoreductase subunit 5, chloroplastic (ndhF).